Reading from the N-terminus, the 1017-residue chain is Multiple C2 domain and transmembrane region protein 14 (1017 aa).

The 110-residue stretch at Met1–Tyr110 folds into the C2 1 domain. The tract at residues Ala139–Pro231 is disordered. Low complexity predominate over residues Pro141–Ala153. The span at Thr154–Asp213 shows a compositional bias: basic and acidic residues. Pro residues predominate over residues Ala217–Pro231. 3 consecutive C2 domains span residues Asp258 to Tyr387, Asp420 to Phe554, and Val587 to Tyr714. 5 residues coordinate Ca(2+): Asp296, Asn299, Asp352, Thr355, and Glu359. 2 helical membrane-spanning segments follow: residues Val851–Ile871 and Ala957–Phe977.

Belongs to the MCTP family. Requires Ca(2+) as cofactor. In terms of tissue distribution, expressed in incipient leaf primordia and in roots meristems. Observed in flowers.

It localises to the membrane. Its subcellular location is the vesicle. The protein localises to the golgi apparatus membrane. In terms of biological role, may function as a signaling molecule by regulating the trafficking of other regulators. This Arabidopsis thaliana (Mouse-ear cress) protein is Multiple C2 domain and transmembrane region protein 14.